A 426-amino-acid polypeptide reads, in one-letter code: 26S proteasome regulatory subunit 7 homolog A (426 aa).

Gly-209–Thr-216 contributes to the ATP binding site. Glycyl lysine isopeptide (Lys-Gly) (interchain with G-Cter in ubiquitin) cross-links involve residues Lys-400 and Lys-415.

Belongs to the AAA ATPase family. Component of the 19S regulatory particle (RP/PA700) base subcomplex of the 26S proteasome. The 26S proteasome is composed of a core protease (CP), known as the 20S proteasome, capped at one or both ends by the 19S regulatory particle (RP/PA700). The RP/PA700 complex is composed of at least 17 different subunits in two subcomplexes, the base and the lid, which form the portions proximal and distal to the 20S proteolytic core, respectively.

The protein localises to the cytoplasm. The protein resides in the nucleus. Its function is as follows. The 26S proteasome is involved in the ATP-dependent degradation of ubiquitinated proteins. The regulatory (or ATPase) complex confers ATP dependency and substrate specificity to the 26S complex. The protein is 26S proteasome regulatory subunit 7 homolog A (RPT1A) of Arabidopsis thaliana (Mouse-ear cress).